The primary structure comprises 385 residues: Glucans biosynthesis protein C (385 aa).

The next 10 membrane-spanning stretches (helical) occupy residues 17-37, 60-80, 91-111, 137-157, 173-193, 212-232, 239-259, 274-294, 311-331, and 338-358; these read AWLM…SHTW, MQVF…RYPL, VGIP…IMLQ, ISHL…VWIF, KFSM…YAVI, FIVM…LAFI, LFTT…VAYL, TESV…FSFG, ASLF…AYIT, and WLGF…LYEI.

It belongs to the acyltransferase 3 family. OpgC subfamily.

The protein localises to the cell membrane. Its pathway is glycan metabolism; osmoregulated periplasmic glucan (OPG) biosynthesis. Necessary for the succinyl substitution of periplasmic glucans. Could catalyze the transfer of succinyl residues from the cytoplasmic side of the membrane to the nascent glucan backbones on the periplasmic side of the membrane. This chain is Glucans biosynthesis protein C, found in Escherichia coli (strain SMS-3-5 / SECEC).